Reading from the N-terminus, the 207-residue chain is Thymidylate kinase (207 aa).

ATP is bound at residue 7-14; the sequence is GCEGSGKS.

The protein belongs to the thymidylate kinase family.

It catalyses the reaction dTMP + ATP = dTDP + ADP. Its function is as follows. Phosphorylation of dTMP to form dTDP in both de novo and salvage pathways of dTTP synthesis. In Chlamydia caviae (strain ATCC VR-813 / DSM 19441 / 03DC25 / GPIC) (Chlamydophila caviae), this protein is Thymidylate kinase.